The following is an 89-amino-acid chain: Protein S100-A8 (89 aa).

EF-hand domains lie at 13–48 (IDVYHNYSNIQGNHHALYKNDFKKMVTTECPQFVQN) and 46–81 (VQNINIENLFRELDINSDNAINFEEFLAMVIKVGVA). Positions 17 and 27 each coordinate Zn(2+). Residue Asp-33 coordinates Ca(2+). Cys-42 is modified (S-nitrosocysteine). Ca(2+) contacts are provided by Asp-59, Asn-61, Asp-63, and Glu-70. His-83 is a binding site for Zn(2+).

The protein belongs to the S-100 family. As to quaternary structure, homodimer. Preferentially exists as a heterodimer or heterotetramer with S100A9 known as calprotectin (S100A8/A9). Calprotectin (S100A8/9) interacts with CEACAM3 and tubulin filaments in a calcium-dependent manner. Heterotetrameric calprotectin (S100A8/A9) interacts with ANXA6 and associates with tubulin filaments in activated monocytes. S100A8 and calprotectin (S100A8/9) interact with NCF2/P67PHOX, RAC1 and RAC2. Calprotectin (S100A8/9) interacts with CYBA and CYBB. S100A8 interacts with AGER, ATP2A2 and with the heterodimeric complex formed by TLR4 and LY96. Calprotectin (S100A8/9) interacts with NOS2 to form the iNOS-S100A8/A9 transnitrosylase complex. Calprotectin (S100A8/9) interacts with CD69.

It localises to the secreted. The protein resides in the cytoplasm. It is found in the cytoskeleton. The protein localises to the cell membrane. Its activity is regulated as follows. Calprotectin (S100A8/A9) activity on TLR4 signaling is inhibited by paquinimod. S100A8 is a calcium- and zinc-binding protein which plays a prominent role in the regulation of inflammatory processes and immune response. It can induce neutrophil chemotaxis and adhesion. Predominantly found as calprotectin (S100A8/A9) which has a wide plethora of intra- and extracellular functions. The intracellular functions include: facilitating leukocyte arachidonic acid trafficking and metabolism, modulation of the tubulin-dependent cytoskeleton during migration of phagocytes and activation of the neutrophilic NADPH-oxidase. Also participates in regulatory T-cell differentiation together with CD69. Activates NADPH-oxidase by facilitating the enzyme complex assembly at the cell membrane, transferring arachidonic acid, an essential cofactor, to the enzyme complex and S100A8 contributes to the enzyme assembly by directly binding to NCF2/P67PHOX. The extracellular functions involve pro-inflammatory, antimicrobial, oxidant-scavenging and apoptosis-inducing activities. Its pro-inflammatory activity includes recruitment of leukocytes, promotion of cytokine and chemokine production, and regulation of leukocyte adhesion and migration. Acts as an alarmin or a danger associated molecular pattern (DAMP) molecule and stimulates innate immune cells via binding to pattern recognition receptors such as Toll-like receptor 4 (TLR4) and receptor for advanced glycation endproducts (AGER). Binding to TLR4 and AGER activates the MAP-kinase and NF-kappa-B signaling pathways resulting in the amplification of the pro-inflammatory cascade. Has antimicrobial activity towards bacteria and fungi and exerts its antimicrobial activity probably via chelation of Zn(2+) which is essential for microbial growth. Can induce cell death via autophagy and apoptosis and this occurs through the cross-talk of mitochondria and lysosomes via reactive oxygen species (ROS) and the process involves BNIP3. Can regulate neutrophil number and apoptosis by an anti-apoptotic effect; regulates cell survival via ITGAM/ITGB and TLR4 and a signaling mechanism involving MEK-ERK. Its role as an oxidant scavenger has a protective role in preventing exaggerated tissue damage by scavenging oxidants. The iNOS-S100A8/A9 transnitrosylase complex is proposed to direct selective inflammatory stimulus-dependent S-nitrosylation of multiple targets such as GAPDH, ANXA5, EZR, MSN and VIM by recognizing a [IL]-x-C-x-x-[DE] motif; S100A8 seems to contribute to S-nitrosylation site selectivity. Functionally, (Microbial infection) Upon infection by murine coronavirus (MHV-A59), induces expansion of aberrant immature neutrophils in a TLR4-dependent manner. This is Protein S100-A8 from Mus musculus (Mouse).